We begin with the raw amino-acid sequence, 596 residues long: MKHIRNFSIIAHIDHGKSTLSDRLIQECGGLTDREMAAQVLDSMDIERERGITIKAQSVTLDYLANDGETYQLNFIDTPGHVDFSYEVSRSLAACEGALLVVDAGQGVEAQTLANCYTALEMDMDVVPVLNKIDLPQADPDRVAEEIEDIVGIEATDAVRCSAKTGIGIKDVLEVIVEQIPPPEGDPEGPLQALIIDSWFDSYLGVVSLVRIKNGILKKGDKFKVMSTGQNYNADRVGIFTPKQTDTTELKTGEVGFVIAGIKEIHGAPVGDTLTHSKHGAETPLAGFKKVKPQVYAGLFPISTDDYENFRDALNKLSLNDASLFFEPETSSALGFGFRIGFLGLLHMEIIQERLEREYNLELITTAPTVVYEIVQTNGETIYVDNPSDLPAVNNIAEMREPIVETNILVPKEYLGNVITLCIEKRGVQTNLVYHGNQVALTYELPMAEVVMDFFDRLKSTSRGYASLEYNFIRFEPADMVRLDILINGDRVDALAMIIHKGLIRSKGLALVNKMKELIPRQMFDIAVQAAVGSQIIARSSIKAMRKDVTAKCYGGDVSRKKKLLNKQKEGKKRMKQVGNVEVPQEAFLAVLKLND.

The tr-type G domain maps to 2 to 184 (KHIRNFSIIA…VIVEQIPPPE (183 aa)). GTP-binding positions include 14–19 (DHGKST) and 131–134 (NKID).

Belongs to the TRAFAC class translation factor GTPase superfamily. Classic translation factor GTPase family. LepA subfamily.

Its subcellular location is the cell inner membrane. The enzyme catalyses GTP + H2O = GDP + phosphate + H(+). Functionally, required for accurate and efficient protein synthesis under certain stress conditions. May act as a fidelity factor of the translation reaction, by catalyzing a one-codon backward translocation of tRNAs on improperly translocated ribosomes. Back-translocation proceeds from a post-translocation (POST) complex to a pre-translocation (PRE) complex, thus giving elongation factor G a second chance to translocate the tRNAs correctly. Binds to ribosomes in a GTP-dependent manner. The sequence is that of Elongation factor 4 from Shewanella pealeana (strain ATCC 700345 / ANG-SQ1).